A 99-amino-acid polypeptide reads, in one-letter code: Signal recognition particle 19 kDa protein (99 aa).

It belongs to the SRP19 family. In terms of assembly, part of the signal recognition particle protein translocation system, which is composed of SRP and FtsY. Archaeal SRP consists of a 7S RNA molecule of 300 nucleotides and two protein subunits: SRP54 and SRP19.

Its subcellular location is the cytoplasm. In terms of biological role, involved in targeting and insertion of nascent membrane proteins into the cytoplasmic membrane. Binds directly to 7S RNA and mediates binding of the 54 kDa subunit of the SRP. This is Signal recognition particle 19 kDa protein from Ignicoccus hospitalis (strain KIN4/I / DSM 18386 / JCM 14125).